A 692-amino-acid chain; its full sequence is Putative clathrin assembly protein At1g14910 (692 aa).

The region spanning 24 to 161 (RVNSDYAELD…ECFRVLKYDI (138 aa)) is the ENTH domain. The segment at 325 to 383 (YTPDDGLTSEDVGPSHEEHETSSPSDSAVVPSEETQLSSQSPPSVETPQNFIDTDDLLG) is disordered. Over residues 357-376 (EETQLSSQSPPSVETPQNFI) the composition is skewed to polar residues. Residue S363 is modified to Phosphoserine. Residues 532–548 (FGEFPIVPVSEPQSTTS) form repeat 1. Residues 532–666 (FGEFPIVPVS…PVSEPQNTTG (135 aa)) are 8 X 17 AA approximate tandem repeats. Residues 549–564 (FGAFPVPVSEPSNTTG) form a 2; truncated repeat. Tandem repeats lie at residues 565–581 (FGEIPVVPVTEPPNTTA), 582–598 (FGEFPVVPVSEPQNITG), 599–615 (FGALPVTPASEPSNTTG), 616–632 (FGEFPVVSVSAPQNTTG), 633–649 (FGALPVIPVSEPSKTTG), and 650–666 (LGEFPVVPVSEPQNTTG).

Expressed in the whole plant.

It localises to the membrane. The protein localises to the clathrin-coated pit. It is found in the golgi apparatus. Its subcellular location is the cytoplasmic vesicle. The protein resides in the clathrin-coated vesicle. This is Putative clathrin assembly protein At1g14910 from Arabidopsis thaliana (Mouse-ear cress).